Here is a 697-residue protein sequence, read N- to C-terminus: MPSAPSTPPSKRKSKFSGFGKFFKPWKWRKRKSSDSFRETQEVLERKISMRKPREELVKRGLIVDVPEEDVSIPSESPPLRNGHMNVKHANLPEDSGGLKRKTRPDSTGHRPKSGETTAQPRSTAEVAPMELHATADVSPMQPQASAEVAPAQPRPASEVGQVQPRPISEVAPMQPRPISEVAPVHPRHVPEKTSEKYRPKSEVAPVRTSRPTSEVAPVQKVSRDFSKQPLLPPKRPLSSSTSVTQESAVGGQKFDPSTRPQSSTPVPTPRTIHPPVSSKQPPVPPPKPQNRNSNPLMAELSLALAGNTLSPAGSRPSPPLPPKRAMPPSTDAVTNKEKALRPASLPPIPANEIAAPSPPSPPVSSRIPAPNPPVPPLTLAPPISEVEKERSASPIPLHIRIQQALNSPQPLPLLDSSQRAQSLLFMQHEVGPSEEGTRVRSLPVTIELLKVPDDDDDEDELSLEDESLSPDSSESHPSRVYIGDVPSVTVIPSYLPTCVQEEDEEEGVSDTDSEGPVLYREEDEDEEEEETSSLANKVKRKDTLAMKLSGRMAPQDSNTELPHRSKDEWNQIRQQIGTQLNRRLSQRPTAEELEQRNILQKNEADRLAEKKEIKRRLTRKLSQRPTVAELLERKILRFNEYVEVTDAHDYDRRADKPWTRLTPADKAAIRKELNEFKSTEMAVHDESKHFTRFHRP.

An RPEL 1 repeat occupies 42-67 (EVLERKISMRKPREELVKRGLIVDVP). Disordered stretches follow at residues 63–381 (IVDV…LTLA) and 450–569 (LKVP…SKDE). Over residues 189 to 202 (HVPEKTSEKYRPKS) the composition is skewed to basic and acidic residues. Pro residues-rich tracts occupy residues 317 to 326 (PSPPLPPKRA) and 370 to 380 (APNPPVPPLTL). Composition is skewed to acidic residues over residues 454-469 (DDDD…DESL), 501-514 (QEED…DTDS), and 522-532 (EEDEDEEEEET). RPEL repeat units lie at residues 579-604 (TQLN…QKNE) and 616-641 (RRLT…RFNE).

Belongs to the phosphatase and actin regulator family. In terms of assembly, binds ppp1ca and actin.

It is found in the cytoplasm. The protein localises to the cell projection. Its subcellular location is the lamellipodium. In terms of biological role, regulator of protein phosphatase 1 (PP1) required for neural tube and optic fissure closure, and enteric neural crest cell (ENCCs) migration during development. Acts as an activator of PP1. During neural tube closure, localizes to the ventral neural tube and activates PP1, leading to down-regulate cell proliferation within cranial neural tissue and the neural retina. Also acts as a regulator of migration of enteric neural crest cells (ENCCs) by activating PP1, leading to repression of the integrin signaling through the rho/rock pathway. The polypeptide is Phosphatase and actin regulator 4-B (phactr4-b) (Xenopus laevis (African clawed frog)).